Here is a 113-residue protein sequence, read N- to C-terminus: Flagellar transcriptional regulator FlhD (113 aa).

Belongs to the FlhD family. In terms of assembly, homodimer; disulfide-linked. Forms a heterohexamer composed of two FlhC and four FlhD subunits. Each FlhC binds a FlhD dimer, forming a heterotrimer, and a hexamer assembles by dimerization of two heterotrimers.

The protein localises to the cytoplasm. In terms of biological role, functions in complex with FlhC as a master transcriptional regulator that regulates transcription of several flagellar and non-flagellar operons by binding to their promoter region. Activates expression of class 2 flagellar genes, including fliA, which is a flagellum-specific sigma factor that turns on the class 3 genes. Also regulates genes whose products function in a variety of physiological pathways. The chain is Flagellar transcriptional regulator FlhD from Salmonella typhi.